We begin with the raw amino-acid sequence, 105 residues long: Dynein axonemal light chain 4 (105 aa).

This sequence belongs to the dynein light chain family. Consists of at least two heavy chains and a number of intermediate and light chains.

It is found in the cytoplasm. Its subcellular location is the cytoskeleton. It localises to the cilium axoneme. Functionally, force generating protein of respiratory cilia. Produces force towards the minus ends of microtubules. Dynein has ATPase activity. In Mus musculus (Mouse), this protein is Dynein axonemal light chain 4 (Dnal4).